The sequence spans 336 residues: UDP-3-O-acylglucosamine N-acyltransferase (336 aa).

The Proton acceptor role is filled by His233.

Belongs to the transferase hexapeptide repeat family. LpxD subfamily. As to quaternary structure, homotrimer.

The catalysed reaction is a UDP-3-O-[(3R)-3-hydroxyacyl]-alpha-D-glucosamine + a (3R)-hydroxyacyl-[ACP] = a UDP-2-N,3-O-bis[(3R)-3-hydroxyacyl]-alpha-D-glucosamine + holo-[ACP] + H(+). The protein operates within bacterial outer membrane biogenesis; LPS lipid A biosynthesis. Catalyzes the N-acylation of UDP-3-O-acylglucosamine using 3-hydroxyacyl-ACP as the acyl donor. Is involved in the biosynthesis of lipid A, a phosphorylated glycolipid that anchors the lipopolysaccharide to the outer membrane of the cell. This is UDP-3-O-acylglucosamine N-acyltransferase from Helicobacter pylori (strain ATCC 700392 / 26695) (Campylobacter pylori).